A 361-amino-acid polypeptide reads, in one-letter code: Chorismate synthase (361 aa).

Residue Arg-48 participates in NADP(+) binding. Residues 125-127 (RSS), 238-239 (NA), Gly-278, 293-297 (KPTSS), and Arg-319 each bind FMN.

It belongs to the chorismate synthase family. In terms of assembly, homotetramer. It depends on FMNH2 as a cofactor.

It catalyses the reaction 5-O-(1-carboxyvinyl)-3-phosphoshikimate = chorismate + phosphate. It participates in metabolic intermediate biosynthesis; chorismate biosynthesis; chorismate from D-erythrose 4-phosphate and phosphoenolpyruvate: step 7/7. In terms of biological role, catalyzes the anti-1,4-elimination of the C-3 phosphate and the C-6 proR hydrogen from 5-enolpyruvylshikimate-3-phosphate (EPSP) to yield chorismate, which is the branch point compound that serves as the starting substrate for the three terminal pathways of aromatic amino acid biosynthesis. This reaction introduces a second double bond into the aromatic ring system. This chain is Chorismate synthase, found in Aliivibrio fischeri (strain ATCC 700601 / ES114) (Vibrio fischeri).